The following is a 683-amino-acid chain: DNA-directed RNA polymerase subunit beta' (683 aa).

Residues cysteine 69, cysteine 71, cysteine 87, and cysteine 90 each coordinate Zn(2+). Aspartate 489, aspartate 491, and aspartate 493 together coordinate Mg(2+).

It belongs to the RNA polymerase beta' chain family. RpoC1 subfamily. As to quaternary structure, in plastids the minimal PEP RNA polymerase catalytic core is composed of four subunits: alpha, beta, beta', and beta''. When a (nuclear-encoded) sigma factor is associated with the core the holoenzyme is formed, which can initiate transcription. It depends on Mg(2+) as a cofactor. The cofactor is Zn(2+).

Its subcellular location is the plastid. It localises to the chloroplast. It carries out the reaction RNA(n) + a ribonucleoside 5'-triphosphate = RNA(n+1) + diphosphate. Functionally, DNA-dependent RNA polymerase catalyzes the transcription of DNA into RNA using the four ribonucleoside triphosphates as substrates. The polypeptide is DNA-directed RNA polymerase subunit beta' (Sorghum bicolor (Sorghum)).